The primary structure comprises 1426 residues: ABC transporter G family member 31 (1426 aa).

N6 and N150 each carry an N-linked (GlcNAc...) asparagine glycan. In terms of domain architecture, ABC transporter 1 spans 160–434 (LSSLRIIKPR…FESLGFRLPP (275 aa)). 193 to 200 (GPPGSGKS) provides a ligand contact to ATP. The N-linked (GlcNAc...) asparagine glycan is linked to N219. Phosphothreonine is present on T276. One can recognise an ABC transmembrane type-2 1 domain in the interval 512 to 725 (ENLKVCFVRE…GQRAIAVNEF (214 aa)). The next 6 helical transmembrane spans lie at 530-550 (FLYT…ATVF), 569-589 (CLFF…PLMI), 618-638 (VPYS…TVGL), 649-669 (MLLL…MASL), 675-695 (IANT…GFVI), and 760-780 (IGIA…TLAL). Residues 826–1078 (MTFHNVNYYV…VLVDYFQGIN (253 aa)) form the ABC transporter 2 domain. The N-linked (GlcNAc...) asparagine glycan is linked to N856. An ATP-binding site is contributed by 871-878 (GSSGAGKT). The ABC transmembrane type-2 2 domain occupies 1151-1365 (SQFLLCLWKQ…TLQGVILSQL (215 aa)). Helical transmembrane passes span 1172–1192 (LVRL…FWDI), 1202–1222 (LITV…SNAS), 1258–1278 (IPYI…TIGF), 1285–1305 (FVLY…YGMM), 1315–1335 (LAAV…GFLV), 1342–1362 (VWWI…GVIL), and 1396–1416 (IGVS…AFAL).

Belongs to the ABC transporter superfamily. ABCG family. PDR (TC 3.A.1.205) subfamily. As to expression, expressed in seedlings, stems, leaves, siliques and inflorescence. In seeds, confined to the endosperm. Highly expressed in the tapetum of anthers.

The protein resides in the cell membrane. It carries out the reaction abscisate(in) + ATP + H2O = abscisate(out) + ADP + phosphate + H(+). In terms of biological role, together with ABCG25, export abscisic acid (ABA) from the endosperm to deliver it to the embryo via ABCG30 and ABCG40-mediated import to suppress radicle extension and subsequent embryonic growth. Together with ABCG9, involved in pollen coat deposition of steryl glycosides required for pollen fitness. May be a general defense protein. The sequence is that of ABC transporter G family member 31 from Arabidopsis thaliana (Mouse-ear cress).